The following is a 274-amino-acid chain: Phosphoribosylaminoimidazole-succinocarboxamide synthase (274 aa).

It belongs to the SAICAR synthetase family.

It catalyses the reaction 5-amino-1-(5-phospho-D-ribosyl)imidazole-4-carboxylate + L-aspartate + ATP = (2S)-2-[5-amino-1-(5-phospho-beta-D-ribosyl)imidazole-4-carboxamido]succinate + ADP + phosphate + 2 H(+). It participates in purine metabolism; IMP biosynthesis via de novo pathway; 5-amino-1-(5-phospho-D-ribosyl)imidazole-4-carboxamide from 5-amino-1-(5-phospho-D-ribosyl)imidazole-4-carboxylate: step 1/2. This is Phosphoribosylaminoimidazole-succinocarboxamide synthase from Nitrosopumilus maritimus (strain SCM1).